Consider the following 217-residue polypeptide: Uracil-DNA glycosylase (217 aa).

Aspartate 62 serves as the catalytic Proton acceptor.

The protein belongs to the uracil-DNA glycosylase (UDG) superfamily. UNG family.

The protein localises to the cytoplasm. The catalysed reaction is Hydrolyzes single-stranded DNA or mismatched double-stranded DNA and polynucleotides, releasing free uracil.. Functionally, excises uracil residues from the DNA which can arise as a result of misincorporation of dUMP residues by DNA polymerase or due to deamination of cytosine. The chain is Uracil-DNA glycosylase from Streptococcus pyogenes serotype M6 (strain ATCC BAA-946 / MGAS10394).